A 657-amino-acid polypeptide reads, in one-letter code: Glycogen debranching enzyme (657 aa).

Catalysis depends on D336, which acts as the Nucleophile. The Proton donor role is filled by E371. The tract at residues 460-481 is disordered; it reads ANGEENRDGTNNNYSNNHGKEG.

This sequence belongs to the glycosyl hydrolase 13 family.

The enzyme catalyses Hydrolysis of (1-&gt;6)-alpha-D-glucosidic linkages to branches with degrees of polymerization of three or four glucose residues in limit dextrin.. Its pathway is glycan degradation; glycogen degradation. Functionally, removes maltotriose and maltotetraose chains that are attached by 1,6-alpha-linkage to the limit dextrin main chain, generating a debranched limit dextrin. This is Glycogen debranching enzyme from Escherichia coli O157:H7.